The following is a 167-amino-acid chain: Putative lipoprotein YteS (167 aa).

A signal peptide spans 1–20 (MTKRIRTALCVIVSVLFLAS). Cys21 carries the N-palmitoyl cysteine lipid modification. The S-diacylglycerol cysteine moiety is linked to residue Cys21.

It localises to the cell membrane. Its function is as follows. May play a role in the degradation of type I rhamnogalacturonan derived from plant cell walls. This is Putative lipoprotein YteS (yteS) from Bacillus subtilis (strain 168).